A 283-amino-acid polypeptide reads, in one-letter code: Glutamate racemase (283 aa).

Substrate-binding positions include 28 to 29 (DS) and 60 to 61 (YG). Cys92 serves as the catalytic Proton donor/acceptor. A substrate-binding site is contributed by 93 to 94 (NT). The Proton donor/acceptor role is filled by Cys204. 205-206 (TH) contributes to the substrate binding site.

The protein belongs to the aspartate/glutamate racemases family.

The enzyme catalyses L-glutamate = D-glutamate. Its pathway is cell wall biogenesis; peptidoglycan biosynthesis. In terms of biological role, provides the (R)-glutamate required for cell wall biosynthesis. This is Glutamate racemase from Salmonella choleraesuis (strain SC-B67).